A 235-amino-acid polypeptide reads, in one-letter code: Phosphoribosylaminoimidazole-succinocarboxamide synthase (235 aa).

This sequence belongs to the SAICAR synthetase family.

It carries out the reaction 5-amino-1-(5-phospho-D-ribosyl)imidazole-4-carboxylate + L-aspartate + ATP = (2S)-2-[5-amino-1-(5-phospho-beta-D-ribosyl)imidazole-4-carboxamido]succinate + ADP + phosphate + 2 H(+). It functions in the pathway purine metabolism; IMP biosynthesis via de novo pathway; 5-amino-1-(5-phospho-D-ribosyl)imidazole-4-carboxamide from 5-amino-1-(5-phospho-D-ribosyl)imidazole-4-carboxylate: step 1/2. This chain is Phosphoribosylaminoimidazole-succinocarboxamide synthase, found in Streptococcus thermophilus (strain CNRZ 1066).